Reading from the N-terminus, the 415-residue chain is Serine hydroxymethyltransferase (415 aa).

Residues L117 and 121 to 123 (GHL) each bind (6S)-5,6,7,8-tetrahydrofolate. Position 226 is an N6-(pyridoxal phosphate)lysine (K226). (6S)-5,6,7,8-tetrahydrofolate is bound by residues E241 and 349-351 (SPF).

Belongs to the SHMT family. In terms of assembly, homodimer. It depends on pyridoxal 5'-phosphate as a cofactor.

The protein resides in the cytoplasm. It carries out the reaction (6R)-5,10-methylene-5,6,7,8-tetrahydrofolate + glycine + H2O = (6S)-5,6,7,8-tetrahydrofolate + L-serine. It functions in the pathway one-carbon metabolism; tetrahydrofolate interconversion. The protein operates within amino-acid biosynthesis; glycine biosynthesis; glycine from L-serine: step 1/1. Functionally, catalyzes the reversible interconversion of serine and glycine with tetrahydrofolate (THF) serving as the one-carbon carrier. This reaction serves as the major source of one-carbon groups required for the biosynthesis of purines, thymidylate, methionine, and other important biomolecules. Also exhibits THF-independent aldolase activity toward beta-hydroxyamino acids, producing glycine and aldehydes, via a retro-aldol mechanism. This is Serine hydroxymethyltransferase from Trichlorobacter lovleyi (strain ATCC BAA-1151 / DSM 17278 / SZ) (Geobacter lovleyi).